A 1395-amino-acid polypeptide reads, in one-letter code: DNA-directed RNA polymerase subunit beta' (1395 aa).

Zn(2+) is bound by residues C70, C72, C85, and C88. The Mg(2+) site is built by D460, D462, and D464. Zn(2+) contacts are provided by C814, C888, C895, and C898.

This sequence belongs to the RNA polymerase beta' chain family. The RNAP catalytic core consists of 2 alpha, 1 beta, 1 beta' and 1 omega subunit. When a sigma factor is associated with the core the holoenzyme is formed, which can initiate transcription. It depends on Mg(2+) as a cofactor. Zn(2+) is required as a cofactor.

It carries out the reaction RNA(n) + a ribonucleoside 5'-triphosphate = RNA(n+1) + diphosphate. Functionally, DNA-dependent RNA polymerase catalyzes the transcription of DNA into RNA using the four ribonucleoside triphosphates as substrates. The polypeptide is DNA-directed RNA polymerase subunit beta' (Pseudoalteromonas atlantica (strain T6c / ATCC BAA-1087)).